Consider the following 103-residue polypeptide: Flagellar hook-basal body complex protein FliE (103 aa).

This sequence belongs to the FliE family.

It is found in the bacterial flagellum basal body. This chain is Flagellar hook-basal body complex protein FliE, found in Helicobacter hepaticus (strain ATCC 51449 / 3B1).